Consider the following 196-residue polypeptide: MFLDLHPYTILVSIFIILLVKQIVGRIGKSTIQEFVWLLYLKISPNQAIKDYNTKKVELHEINKQKRSISAQDEYAKWTKLNRQADKLTSEIQKLNEEIRQSKASIDKLANVLLMVLTTLPIWVARIFFRKTHLFYLRSGIFPRYIEWVLALPFFPSGAVGLTVWMFAANSVIHNVISLVSFAFEKRVEKPVRQKK.

The Lumenal segment spans residues 1 to 10 (MFLDLHPYTI). The helical transmembrane segment at 11–30 (LVSIFIILLVKQIVGRIGKS) threads the bilayer. Residues 31 to 114 (TIQEFVWLLY…SIDKLANVLL (84 aa)) lie on the Cytoplasmic side of the membrane. Positions 76–114 (AKWTKLNRQADKLTSEIQKLNEEIRQSKASIDKLANVLL) form a coiled coil. A helical membrane pass occupies residues 115–135 (MVLTTLPIWVARIFFRKTHLF). Topologically, residues 136–159 (YLRSGIFPRYIEWVLALPFFPSGA) are lumenal. Residues 160–176 (VGLTVWMFAANSVIHNV) form a helical membrane-spanning segment. Residues 177–196 (ISLVSFAFEKRVEKPVRQKK) are Cytoplasmic-facing.

This sequence belongs to the WRB/GET1 family. As to quaternary structure, component of the Golgi to ER traffic (GET) complex, which is composed of GET1, GET2 and GET3. Within the complex, GET1 and GET2 form a heterotetramer which is stabilized by phosphatidylinositol binding and which binds to the GET3 homodimer.

It is found in the endoplasmic reticulum membrane. The protein resides in the golgi apparatus membrane. Its function is as follows. Required for the post-translational delivery of tail-anchored (TA) proteins to the endoplasmic reticulum. Together with GET2, acts as a membrane receptor for soluble GET3, which recognizes and selectively binds the transmembrane domain of TA proteins in the cytosol. The GET complex cooperates with the HDEL receptor ERD2 to mediate the ATP-dependent retrieval of resident ER proteins that contain a C-terminal H-D-E-L retention signal from the Golgi to the ER. This chain is Golgi to ER traffic protein 1, found in Candida tropicalis (strain ATCC MYA-3404 / T1) (Yeast).